The sequence spans 815 residues: Ferripyoverdine receptor (815 aa).

Positions 1 to 43 are cleaved as a signal peptide; that stretch reads MPAPHGLSPLSKAFLMRRAFQRRILPHSLAMALSLPLAGYVQA. Residues 161-271 form the TBDR plug domain; sequence TPRETPQSIT…LGATINLIRK (111 aa). Residues 276-815 form the TBDR beta-barrel domain; that stretch reads EFKGHVELGA…NLMFSTRWDF (540 aa). Residues 798 to 815 carry the TonB C-terminal box motif; that stretch reads SASYGDPRNLMFSTRWDF.

Belongs to the TonB-dependent receptor family.

It localises to the cell outer membrane. Receptor for the siderophore ferripyoverdine. This chain is Ferripyoverdine receptor (fpvA), found in Pseudomonas aeruginosa (strain ATCC 15692 / DSM 22644 / CIP 104116 / JCM 14847 / LMG 12228 / 1C / PRS 101 / PAO1).